A 723-amino-acid polypeptide reads, in one-letter code: Host cell factor 2 (723 aa).

Kelch repeat units lie at residues 34–79 (LMII…GFVC), 83–130 (RILV…RLGH), 207–255 (KMYV…VIGN), and 257–305 (MYIF…DSQE). Fibronectin type-III domains are found at residues 357–436 (PPAP…ANCT), 516–606 (TPSN…TCIP), and 608–720 (FPGA…SKKA). Residues 398-472 (AASPDASAAP…VALHSPLAPN (75 aa)) form a disordered region. The segment covering 419–433 (QGSNSILHNSVSDPA) has biased composition (polar residues).

As to quaternary structure, binds KMT2A/MLL1. Component of the MLL1/MLL complex, at least composed of KMT2A/MLL1, ASH2L, RBBP5, DPY30, WDR5, MEN1, HCFC1 and HCFC2. Interacts with TASOR.

It is found in the cytoplasm. The protein localises to the nucleus. The protein is Host cell factor 2 (Hcfc2) of Rattus norvegicus (Rat).